The sequence spans 119 residues: Large ribosomal subunit protein bL20 (119 aa).

It belongs to the bacterial ribosomal protein bL20 family.

Its function is as follows. Binds directly to 23S ribosomal RNA and is necessary for the in vitro assembly process of the 50S ribosomal subunit. It is not involved in the protein synthesizing functions of that subunit. This Methylocella silvestris (strain DSM 15510 / CIP 108128 / LMG 27833 / NCIMB 13906 / BL2) protein is Large ribosomal subunit protein bL20.